The sequence spans 406 residues: Glutamyl-tRNA(Gln) amidotransferase subunit D (406 aa).

Residues 68 to 390 (KSISILATGG…EEFINVFNRN (323 aa)) enclose the Asparaginase/glutaminase domain. Active-site residues include Thr78, Thr152, Asp153, and Lys230.

Belongs to the asparaginase 1 family. GatD subfamily. Heterodimer of GatD and GatE.

It carries out the reaction L-glutamyl-tRNA(Gln) + L-glutamine + ATP + H2O = L-glutaminyl-tRNA(Gln) + L-glutamate + ADP + phosphate + H(+). Allows the formation of correctly charged Gln-tRNA(Gln) through the transamidation of misacylated Glu-tRNA(Gln) in organisms which lack glutaminyl-tRNA synthetase. The reaction takes place in the presence of glutamine and ATP through an activated gamma-phospho-Glu-tRNA(Gln). The GatDE system is specific for glutamate and does not act on aspartate. The sequence is that of Glutamyl-tRNA(Gln) amidotransferase subunit D from Thermoplasma volcanium (strain ATCC 51530 / DSM 4299 / JCM 9571 / NBRC 15438 / GSS1).